We begin with the raw amino-acid sequence, 52 residues long: Phospholamban (52 aa).

M1 is modified (N-acetylmethionine). Residues 1 to 31 (MEKVQYITRSALRRASTLEVNPQARQRLQEL) lie on the Cytoplasmic side of the membrane. S16 carries the post-translational modification Phosphoserine; by PKA. Phosphothreonine; by CaMK is present on T17. A helical transmembrane segment spans residues 32 to 52 (FVNFCLILICLLLICIIVMLL).

This sequence belongs to the phospholamban family. As to quaternary structure, homopentamer. In terms of processing, phosphorylated in response to beta-adrenergic stimulation. Phosphorylation by PKA abolishes the inhibition of ATP2A2-mediated calcium uptake. Heart.

It is found in the endoplasmic reticulum membrane. It localises to the sarcoplasmic reticulum membrane. The protein resides in the mitochondrion membrane. Its subcellular location is the membrane. Functionally, reversibly inhibits the activity of ATP2A2/SERCA2 in cardiac sarcoplasmic reticulum by decreasing the apparent affinity of the ATPase for Ca(2+). Binds preferentially to the ATP-bound E1 conformational form of ATP2A2 which predominates at low Ca(2+) concentrations during the diastolic phase of the cardiac cycle. Inhibits ATP2A2 Ca(2+) affinity by disrupting its allosteric activation by ATP. Modulates the contractility of the heart muscle in response to physiological stimuli via its effects on ATP2A2. Modulates calcium re-uptake during muscle relaxation and plays an important role in calcium homeostasis in the heart muscle. The degree of ATP2A2 inhibition depends on the oligomeric state of PLN. ATP2A2 inhibition is alleviated by PLN phosphorylation. In Gallus gallus (Chicken), this protein is Phospholamban (PLN).